The primary structure comprises 156 residues: Small ribosomal subunit protein uS7 (156 aa).

This sequence belongs to the universal ribosomal protein uS7 family. In terms of assembly, part of the 30S ribosomal subunit. Contacts proteins S9 and S11.

Its function is as follows. One of the primary rRNA binding proteins, it binds directly to 16S rRNA where it nucleates assembly of the head domain of the 30S subunit. Is located at the subunit interface close to the decoding center, probably blocks exit of the E-site tRNA. This chain is Small ribosomal subunit protein uS7, found in Sodalis glossinidius (strain morsitans).